The sequence spans 227 residues: GRF-interacting factor 1 (227 aa).

A compositionally biased stretch (low complexity) spans 124–139 (ALSPLQQQQQQQAAAA). 2 disordered regions span residues 124–160 (ALSP…LHGE) and 188–227 (GGGG…EEGS). Residues 217–227 (EYLKGTEEEGS) are compositionally biased toward basic and acidic residues.

The protein belongs to the SS18 family. As to quaternary structure, interacts with GRF4. In terms of tissue distribution, highly expressed in internodes, nodes, developing spikelets and developing anthers. Expressed at low levels in roots and mature glumes.

It is found in the nucleus. The protein localises to the cytoplasm. Functionally, transcription coactivator that plays a role in the regulation of meristematic function in leaves, stems and inflorescences. May regulate leaf size, length of stem internodes, and seed size by promoting cell expansion. Transcription coactivator that plays a role in the regulation of grain size. Component of a network formed by the microRNA396 (miRNA396), the GRFs and their interacting factors (GIFs) acting in the regulation of meristem function, at least partially through the control of cell proliferation. Component of the miRNA396c-GRF4-GIF1 regulatory module that plays an important role in grain size determination. This is GRF-interacting factor 1 from Oryza sativa subsp. japonica (Rice).